The chain runs to 219 residues: Histone H1.01 (219 aa).

Low complexity-rich tracts occupy residues Met1 to Ala19 and Ala27 to Pro39. Disordered regions lie at residues Met1–Ser40 and Leu94–Lys219. An N-acetylserine modification is found at Ser2. Positions Ala37–Lys110 constitute an H15 domain. Composition is skewed to basic residues over residues Ala119–Ala134, Lys142–Lys159, Lys167–Ala185, and Lys192–Lys219.

The protein belongs to the histone H1/H5 family.

The protein localises to the nucleus. It localises to the chromosome. In terms of biological role, histones H1 are necessary for the condensation of nucleosome chains into higher-order structures. The sequence is that of Histone H1.01 from Gallus gallus (Chicken).